Consider the following 227-residue polypeptide: DNA repair protein RecO (227 aa).

This sequence belongs to the RecO family.

Its function is as follows. Involved in DNA repair and RecF pathway recombination. In Pseudomonas savastanoi pv. phaseolicola (strain 1448A / Race 6) (Pseudomonas syringae pv. phaseolicola (strain 1448A / Race 6)), this protein is DNA repair protein RecO.